We begin with the raw amino-acid sequence, 259 residues long: tRNA-cytidine(32) 2-sulfurtransferase (259 aa).

The PP-loop motif signature appears at 40-45; it reads SGGKDS. Residues cysteine 114, cysteine 117, and cysteine 205 each coordinate [4Fe-4S] cluster.

It belongs to the TtcA family. In terms of assembly, homodimer. Requires Mg(2+) as cofactor. The cofactor is [4Fe-4S] cluster.

The protein localises to the cytoplasm. The catalysed reaction is cytidine(32) in tRNA + S-sulfanyl-L-cysteinyl-[cysteine desulfurase] + AH2 + ATP = 2-thiocytidine(32) in tRNA + L-cysteinyl-[cysteine desulfurase] + A + AMP + diphosphate + H(+). It participates in tRNA modification. In terms of biological role, catalyzes the ATP-dependent 2-thiolation of cytidine in position 32 of tRNA, to form 2-thiocytidine (s(2)C32). The sulfur atoms are provided by the cysteine/cysteine desulfurase (IscS) system. This chain is tRNA-cytidine(32) 2-sulfurtransferase, found in Bdellovibrio bacteriovorus (strain ATCC 15356 / DSM 50701 / NCIMB 9529 / HD100).